We begin with the raw amino-acid sequence, 809 residues long: Quinate/shikimate dehydrogenase (quinone) (809 aa).

5 helical membrane passes run Val14–Gly34, Gly41–Phe61, Val68–Phe88, Phe90–Thr110, and Ala127–Ile147.

The protein belongs to the bacterial PQQ dehydrogenase family. The cofactor is pyrroloquinoline quinone.

The protein localises to the cell membrane. It catalyses the reaction L-quinate + a quinone = 3-dehydroquinate + a quinol. The enzyme catalyses shikimate + a quinone = 3-dehydroshikimate + a quinol. The protein operates within aromatic compound metabolism; 3,4-dihydroxybenzoate biosynthesis; 3-dehydroquinate from D-quinate (PQQ route): step 1/1. In terms of biological role, can act either on quinate or on shikimate. In Acinetobacter baylyi (strain ATCC 33305 / BD413 / ADP1), this protein is Quinate/shikimate dehydrogenase (quinone) (quiA).